The chain runs to 336 residues: Holliday junction branch migration complex subunit RuvB (336 aa).

The large ATPase domain (RuvB-L) stretch occupies residues 1-183 (MATERLVAGN…FGINSRLEFY (183 aa)). ATP is bound by residues L22, R23, G64, K67, T68, T69, 130–132 (EDF), R173, Y183, and R220. Position 68 (T68) interacts with Mg(2+). The interval 184 to 254 (QVAELEEIIR…VAREALELLQ (71 aa)) is small ATPAse domain (RuvB-S). Residues 257–336 (AAGLDSSDRR…LGIKPEDRLF (80 aa)) are head domain (RuvB-H). Residues R312 and R317 each coordinate DNA.

Belongs to the RuvB family. Homohexamer. Forms an RuvA(8)-RuvB(12)-Holliday junction (HJ) complex. HJ DNA is sandwiched between 2 RuvA tetramers; dsDNA enters through RuvA and exits via RuvB. An RuvB hexamer assembles on each DNA strand where it exits the tetramer. Each RuvB hexamer is contacted by two RuvA subunits (via domain III) on 2 adjacent RuvB subunits; this complex drives branch migration. In the full resolvosome a probable DNA-RuvA(4)-RuvB(12)-RuvC(2) complex forms which resolves the HJ.

It is found in the cytoplasm. It catalyses the reaction ATP + H2O = ADP + phosphate + H(+). In terms of biological role, the RuvA-RuvB-RuvC complex processes Holliday junction (HJ) DNA during genetic recombination and DNA repair, while the RuvA-RuvB complex plays an important role in the rescue of blocked DNA replication forks via replication fork reversal (RFR). RuvA specifically binds to HJ cruciform DNA, conferring on it an open structure. The RuvB hexamer acts as an ATP-dependent pump, pulling dsDNA into and through the RuvAB complex. RuvB forms 2 homohexamers on either side of HJ DNA bound by 1 or 2 RuvA tetramers; 4 subunits per hexamer contact DNA at a time. Coordinated motions by a converter formed by DNA-disengaged RuvB subunits stimulates ATP hydrolysis and nucleotide exchange. Immobilization of the converter enables RuvB to convert the ATP-contained energy into a lever motion, pulling 2 nucleotides of DNA out of the RuvA tetramer per ATP hydrolyzed, thus driving DNA branch migration. The RuvB motors rotate together with the DNA substrate, which together with the progressing nucleotide cycle form the mechanistic basis for DNA recombination by continuous HJ branch migration. Branch migration allows RuvC to scan DNA until it finds its consensus sequence, where it cleaves and resolves cruciform DNA. The chain is Holliday junction branch migration complex subunit RuvB from Moorella thermoacetica (strain ATCC 39073 / JCM 9320).